The primary structure comprises 641 residues: Mannosyl-oligosaccharide 1,2-alpha-mannosidase IB (641 aa).

Threonine 2 carries the N-acetylthreonine modification. Topologically, residues 2 to 36 (TTPALLPLSGRRIPPLNLGPPSFPHHRATLRLSEK) are cytoplasmic. Residues 37 to 57 (FILLLILSAFITLCFGAFFFL) form a helical; Signal-anchor for type II membrane protein membrane-spanning segment. Topologically, residues 58-641 (PDSSKHKRFD…TTLSGNPAVR (584 aa)) are lumenal. The disordered stretch occupies residues 153–175 (NKPLPPVPIPNLVGIRGGDPEDN). Cysteine 462 and cysteine 494 are disulfide-bonded. Glutamate 508 functions as the Proton donor in the catalytic mechanism. Threonine 619 lines the Ca(2+) pocket. Asparagine 631 carries an N-linked (GlcNAc...) asparagine glycan.

The protein belongs to the glycosyl hydrolase 47 family. Ca(2+) is required as a cofactor. In terms of tissue distribution, highest levels of expression in placenta and testis.

It localises to the golgi apparatus membrane. It catalyses the reaction N(4)-(alpha-D-Man-(1-&gt;2)-alpha-D-Man-(1-&gt;2)-alpha-D-Man-(1-&gt;3)-[alpha-D-Man-(1-&gt;2)-alpha-D-Man-(1-&gt;3)-[alpha-D-Man-(1-&gt;2)-alpha-D-Man-(1-&gt;6)]-alpha-D-Man-(1-&gt;6)]-beta-D-Man-(1-&gt;4)-beta-D-GlcNAc-(1-&gt;4)-beta-D-GlcNAc)-L-asparaginyl-[protein] (N-glucan mannose isomer 9A1,2,3B1,2,3) + 4 H2O = N(4)-(alpha-D-Man-(1-&gt;3)-[alpha-D-Man-(1-&gt;3)-[alpha-D-Man-(1-&gt;6)]-alpha-D-Man-(1-&gt;6)]-beta-D-Man-(1-&gt;4)-beta-D-GlcNAc-(1-&gt;4)-beta-D-GlcNAc)-L-asparaginyl-[protein] (N-glucan mannose isomer 5A1,2) + 4 beta-D-mannose. The catalysed reaction is N(4)-(alpha-D-Man-(1-&gt;2)-alpha-D-Man-(1-&gt;2)-alpha-D-Man-(1-&gt;3)-[alpha-D-Man-(1-&gt;3)-[alpha-D-Man-(1-&gt;2)-alpha-D-Man-(1-&gt;6)]-alpha-D-Man-(1-&gt;6)]-beta-D-Man-(1-&gt;4)-beta-D-GlcNAc-(1-&gt;4)-beta-D-GlcNAc)-L-asparaginyl-[protein] (N-glucan mannose isomer 8A1,2,3B1,3) + 3 H2O = N(4)-(alpha-D-Man-(1-&gt;3)-[alpha-D-Man-(1-&gt;3)-[alpha-D-Man-(1-&gt;6)]-alpha-D-Man-(1-&gt;6)]-beta-D-Man-(1-&gt;4)-beta-D-GlcNAc-(1-&gt;4)-beta-D-GlcNAc)-L-asparaginyl-[protein] (N-glucan mannose isomer 5A1,2) + 3 beta-D-mannose. It participates in protein modification; protein glycosylation. Its activity is regulated as follows. Inhibited by both 1-deoxymannojirimycin and kifunensine. Functionally, involved in the maturation of Asn-linked oligosaccharides. Progressively trim alpha-1,2-linked mannose residues from Man(9)GlcNAc(2) to produce Man(5)GlcNAc(2). The chain is Mannosyl-oligosaccharide 1,2-alpha-mannosidase IB (MAN1A2) from Homo sapiens (Human).